The chain runs to 471 residues: Pneumolysin (471 aa).

4 consecutive transmembrane segments (beta stranded) span residues 158-171, 178-187, 256-265, and 273-285; these read MEQL…DFEK, IDFNSVHSGE, SDEVEAAFEA, and APQT…LDNT. The short motif at 427 to 437 is the Conserved undecapeptide element; sequence ECTGLAWEWWR. The Cholesterol binding motif lies at 459 to 460; that stretch reads TL.

It belongs to the cholesterol-dependent cytolysin family. As to quaternary structure, homooligomeric pore complex of 35 to 50 subunits; when inserted in the host membrane. Has a slightly altered apparent molecular weight in a secA2 deletion mutant, but no post-translational modifications have been found.

It is found in the secreted. It localises to the cell wall. Its subcellular location is the host cell membrane. In terms of biological role, a cholesterol-dependent toxin that causes cytolysis by forming pores in cholesterol containing host membranes. After binding to target membranes, the protein undergoes a major conformation change, leading to its insertion in the host membrane and formation of an oligomeric pore complex. Cholesterol is required for binding to host membranes, membrane insertion and pore formation; cholesterol binding is mediated by a Thr-Leu pair in the C-terminus. Can be reversibly inactivated by oxidation. The sequence is that of Pneumolysin (ply) from Streptococcus pneumoniae serotype 4 (strain ATCC BAA-334 / TIGR4).